Reading from the N-terminus, the 96-residue chain is EFQEEIKEGVEEHKHEDDPEMTRLMVTEKQESKNFSKMAKSQSFSTRIEELGGSISFLTETGVTMIELPKTASEHDMDQLLHDILAAVESLGSTPR.

The interval glutamate 1–glutamate 20 is disordered. The N-linked (GlcNAc...) asparagine glycan is linked to asparagine 34.

This Toxoplasma gondii protein is Antigen H4 (H4).